A 163-amino-acid chain; its full sequence is Glutathione peroxidase-like peroxiredoxin HYR1 (163 aa).

Cysteine 36 (cysteine sulfenic acid (-SOH) intermediate) is an active-site residue. Cysteine 36 and cysteine 82 are oxidised to a cystine.

It belongs to the glutathione peroxidase family. Interacts with YAP1 and probably YBP1.

Its subcellular location is the cytoplasm. It is found in the mitochondrion intermembrane space. The protein resides in the peroxisome matrix. It carries out the reaction a hydroperoxide + [thioredoxin]-dithiol = an alcohol + [thioredoxin]-disulfide + H2O. Involved in oxidative stress response and redox homeostasis. Functions as a sensor and transducer of hydroperoxide stress. In response to hydroperoxide stress it oxidizes (activates) the transcription activator YAP1, which is involved in transcription activation of genes of the oxidative stress response pathway. May also play a direct role in hydroperoxide scavenging, being the most active of three closely related S.cerevisiae peroxiredoxins (GPX1, GPX2, and HYR1/GPX3) with respect to peroxide and lipid hydroperoxide reduction. The three enzymes are not required for the glutaredoxin-mediated antioxidant function. In the presence of peroxides, HYR1/GPX3 is directly oxidized at Cys-36 to form a cysteine sulfenic acid (-SOH). Cys-36-SOH then forms either an intramolecular disulfide bond (Cys-36 with Cys-82) or a transient, intermolecular disulfide bond with 'Cys-598' of YAP1, which is further resolved into a YAP1 intramolecular disulfide bond ('Cys-303' with 'Cys-598'), which causes its nuclear accumulation and activation, and a reduced Cys-36 in HYR1/GPX3. This is Glutathione peroxidase-like peroxiredoxin HYR1 from Saccharomyces cerevisiae (strain ATCC 204508 / S288c) (Baker's yeast).